A 378-amino-acid polypeptide reads, in one-letter code: Chaperone protein DnaJ (378 aa).

The J domain occupies 5 to 70 (DFYEILGVSK…EKRSAYDRMG (66 aa)). The CR-type zinc-finger motif lies at 137 to 215 (GCKKEISFTA…CHGNGVKDKS (79 aa)). Zn(2+) is bound by residues Cys-150, Cys-153, Cys-167, Cys-170, Cys-189, Cys-192, Cys-203, and Cys-206. CXXCXGXG motif repeat units follow at residues 150-157 (CDTCDGKG), 167-174 (CQTCHGQG), 189-196 (CPHCGGTG), and 203-210 (CSDCHGNG).

Belongs to the DnaJ family. As to quaternary structure, homodimer. The cofactor is Zn(2+).

The protein localises to the cytoplasm. Participates actively in the response to hyperosmotic and heat shock by preventing the aggregation of stress-denatured proteins and by disaggregating proteins, also in an autonomous, DnaK-independent fashion. Unfolded proteins bind initially to DnaJ; upon interaction with the DnaJ-bound protein, DnaK hydrolyzes its bound ATP, resulting in the formation of a stable complex. GrpE releases ADP from DnaK; ATP binding to DnaK triggers the release of the substrate protein, thus completing the reaction cycle. Several rounds of ATP-dependent interactions between DnaJ, DnaK and GrpE are required for fully efficient folding. Also involved, together with DnaK and GrpE, in the DNA replication of plasmids through activation of initiation proteins. This is Chaperone protein DnaJ from Psychrobacter cryohalolentis (strain ATCC BAA-1226 / DSM 17306 / VKM B-2378 / K5).